Here is a 374-residue protein sequence, read N- to C-terminus: Biotin synthase (374 aa).

Residues 49 to 276 enclose the Radical SAM core domain; sequence NEVQVSTLLS…KSHVRLSAGR (228 aa). The [4Fe-4S] cluster site is built by C64, C68, and C71. [2Fe-2S] cluster-binding residues include C108, C139, C199, and R271. The tract at residues 344 to 374 is disordered; that stretch reads QQQEQAEGSNDLFIDATKPKVAAKQQHATEA.

The protein belongs to the radical SAM superfamily. Biotin synthase family. In terms of assembly, homodimer. Requires [4Fe-4S] cluster as cofactor. [2Fe-2S] cluster is required as a cofactor.

It catalyses the reaction (4R,5S)-dethiobiotin + (sulfur carrier)-SH + 2 reduced [2Fe-2S]-[ferredoxin] + 2 S-adenosyl-L-methionine = (sulfur carrier)-H + biotin + 2 5'-deoxyadenosine + 2 L-methionine + 2 oxidized [2Fe-2S]-[ferredoxin]. It participates in cofactor biosynthesis; biotin biosynthesis; biotin from 7,8-diaminononanoate: step 2/2. Its function is as follows. Catalyzes the conversion of dethiobiotin (DTB) to biotin by the insertion of a sulfur atom into dethiobiotin via a radical-based mechanism. In Alteromonas mediterranea (strain DSM 17117 / CIP 110805 / LMG 28347 / Deep ecotype), this protein is Biotin synthase.